A 425-amino-acid polypeptide reads, in one-letter code: 3-phosphoshikimate 1-carboxyvinyltransferase (425 aa).

Positions 22, 23, and 27 each coordinate 3-phosphoshikimate. Lys-22 contacts phosphoenolpyruvate. Phosphoenolpyruvate is bound by residues Gly-95 and Arg-123. The 3-phosphoshikimate site is built by Ser-169, Ser-170, Gln-171, Ser-197, Asp-313, Asn-336, and Lys-340. A phosphoenolpyruvate-binding site is contributed by Gln-171. Asp-313 serves as the catalytic Proton acceptor. Phosphoenolpyruvate-binding residues include Arg-344, Arg-386, and Lys-411.

This sequence belongs to the EPSP synthase family. In terms of assembly, monomer.

It localises to the cytoplasm. It carries out the reaction 3-phosphoshikimate + phosphoenolpyruvate = 5-O-(1-carboxyvinyl)-3-phosphoshikimate + phosphate. It functions in the pathway metabolic intermediate biosynthesis; chorismate biosynthesis; chorismate from D-erythrose 4-phosphate and phosphoenolpyruvate: step 6/7. Functionally, catalyzes the transfer of the enolpyruvyl moiety of phosphoenolpyruvate (PEP) to the 5-hydroxyl of shikimate-3-phosphate (S3P) to produce enolpyruvyl shikimate-3-phosphate and inorganic phosphate. This Marinomonas sp. (strain MWYL1) protein is 3-phosphoshikimate 1-carboxyvinyltransferase.